A 687-amino-acid polypeptide reads, in one-letter code: Mediator of RNA polymerase II transcription subunit 17 (687 aa).

Positions 30-43 are enriched in low complexity; it reads LSSNPNSSLHSPTS. Disordered regions lie at residues 30-70 and 130-189; these read LSSN…NKTK and QLGS…ETDD. Composition is skewed to basic and acidic residues over residues 56-70, 136-147, and 167-183; these read TSIR…NKTK, SDGHNSEKKDTD, and KDNP…KTNE.

This sequence belongs to the Mediator complex subunit 17 family. Component of the Mediator complex, which is composed of at least 21 subunits that form three structurally distinct submodules. The Mediator head module contains MED6, MED8, MED11, SRB4/MED17, SRB5/MED18, ROX3/MED19, SRB2/MED20 and SRB6/MED22, the middle module contains MED1, MED4, NUT1/MED5, MED7, CSE2/MED9, NUT2/MED10, SRB7/MED21 and SOH1/MED31, and the tail module contains MED2, PGD1/MED3, RGR1/MED14, GAL11/MED15 and SIN4/MED16. The head and the middle modules interact directly with RNA polymerase II, whereas the elongated tail module interacts with gene-specific regulatory proteins. The head module may also interact with the TFIIF complex. SRB4/MED17 interacts directly with MED6, MED11, ROX3/MED19, SRB2/MED20 and SRB6/MED22. Interacts directly with the activator GAL4.

It localises to the nucleus. Component of the Mediator complex, a coactivator involved in the regulated transcription of nearly all RNA polymerase II-dependent genes. Mediator functions as a bridge to convey information from gene-specific regulatory proteins to the basal RNA polymerase II transcription machinery. The Mediator complex, having a compact conformation in its free form, is recruited to promoters by direct interactions with regulatory proteins and serves for the assembly of a functional preinitiation complex with RNA polymerase II and the general transcription factors. The Mediator complex unfolds to an extended conformation and partially surrounds RNA polymerase II, specifically interacting with the unphosphorylated form of the C-terminal domain (CTD) of RNA polymerase II. The Mediator complex dissociates from the RNA polymerase II holoenzyme and stays at the promoter when transcriptional elongation begins. This chain is Mediator of RNA polymerase II transcription subunit 17 (SRB4), found in Saccharomyces cerevisiae (strain ATCC 204508 / S288c) (Baker's yeast).